The sequence spans 404 residues: Cysteine desulfurase IscS (404 aa).

Pyridoxal 5'-phosphate-binding positions include 75–76 (AT), N155, Q183, and 203–205 (SGH). Residue K206 is modified to N6-(pyridoxal phosphate)lysine. T243 contributes to the pyridoxal 5'-phosphate binding site. C328 serves as the catalytic Cysteine persulfide intermediate. A [2Fe-2S] cluster-binding site is contributed by C328.

This sequence belongs to the class-V pyridoxal-phosphate-dependent aminotransferase family. NifS/IscS subfamily. As to quaternary structure, homodimer. Forms a heterotetramer with IscU, interacts with other sulfur acceptors. Pyridoxal 5'-phosphate serves as cofactor.

The protein localises to the cytoplasm. It carries out the reaction (sulfur carrier)-H + L-cysteine = (sulfur carrier)-SH + L-alanine. It functions in the pathway cofactor biosynthesis; iron-sulfur cluster biosynthesis. Master enzyme that delivers sulfur to a number of partners involved in Fe-S cluster assembly, tRNA modification or cofactor biosynthesis. Catalyzes the removal of elemental sulfur and selenium atoms from cysteine and selenocysteine to produce alanine. Functions as a sulfur delivery protein for Fe-S cluster synthesis onto IscU, an Fe-S scaffold assembly protein, as well as other S acceptor proteins. Also functions as a selenium delivery protein in the pathway for the biosynthesis of selenophosphate. In Salmonella gallinarum (strain 287/91 / NCTC 13346), this protein is Cysteine desulfurase IscS.